A 325-amino-acid chain; its full sequence is 6-phosphogluconolactonase 3, chloroplastic (325 aa).

A chloroplast-targeting transit peptide spans 1 to 68; the sequence is MASSSCFLRS…KSSDTRRKVK (68 aa). A disordered region spans residues 51-73; that stretch reads SIGTGSTKKSSDTRRKVKSMATT. The Microbody targeting signal motif lies at 323-325; that stretch reads SKL.

It belongs to the glucosamine/galactosamine-6-phosphate isomerase family. 6-phosphogluconolactonase subfamily. Interacts with TRXM2. As to expression, expressed in roots, leaves and shoots.

It localises to the plastid. The protein resides in the chloroplast. Its subcellular location is the peroxisome. The enzyme catalyses 6-phospho-D-glucono-1,5-lactone + H2O = 6-phospho-D-gluconate + H(+). The protein operates within carbohydrate degradation; pentose phosphate pathway; D-ribulose 5-phosphate from D-glucose 6-phosphate (oxidative stage): step 2/3. In terms of biological role, catalyzes the hydrolysis of 6-phosphogluconolactone to 6-phosphogluconate. Involved in the regulation of cellular redox state; enzymatic activity is required for this function. Required for sugar-dependent expression of nitrate assimilation genes in the nucleus of root cells. The protein is 6-phosphogluconolactonase 3, chloroplastic of Arabidopsis thaliana (Mouse-ear cress).